Consider the following 1103-residue polypeptide: Activity-dependent neuroprotector homeobox protein (1103 aa).

Glycyl lysine isopeptide (Lys-Gly) (interchain with G-Cter in SUMO2) cross-links involve residues Lys-39 and Lys-72. The segment at 74-97 (FCCSACPFSSKFFSAYKSHFRNVH) adopts a C2H2-type 1; degenerate zinc-finger fold. Residue Ser-98 is modified to Phosphoserine. Residues 107 to 129 (LNCPYCTFNADKKTLETHIKIFH) form a C2H2-type 2; degenerate zinc finger. The disordered stretch occupies residues 133–154 (SSAPSSSLSTFKDKNKNDGLKP). Residues 143-154 (FKDKNKNDGLKP) show a composition bias toward basic and acidic residues. Residues Lys-144 and Lys-155 each participate in a glycyl lysine isopeptide (Lys-Gly) (interchain with G-Cter in SUMO2) cross-link. Residues 165-188 (YYCKKCTYRDPLYEIVRKHIYREH) form a C2H2-type 3; degenerate zinc finger. Glycyl lysine isopeptide (Lys-Gly) (interchain with G-Cter in SUMO2) cross-links involve residues Lys-203, Lys-231, Lys-266, Lys-274, Lys-278, Lys-279, Lys-311, and Lys-335. The C2H2-type 4; degenerate zinc-finger motif lies at 221 to 244 (IHCKRCLFMPKSYEALVQHVIEDH). Arg-348 is modified (asymmetric dimethylarginine). Positions 354–361 (NAPVSIPQ) are neuroprotective peptide (NAP). The interval 360-439 (PQQSQSVKQL…PAATGPPPSN (80 aa)) is disordered. Glycyl lysine isopeptide (Lys-Gly) (interchain with G-Cter in SUMO2) cross-links involve residues Lys-367 and Lys-408. Residues 393–423 (SLQTANTSSLPPGQVKSPSVSQSQASRVLGQ) show a composition bias toward polar residues. 2 positions are modified to phosphoserine: Ser-409 and Ser-413. Lys-427 participates in a covalent cross-link: Glycyl lysine isopeptide (Lys-Gly) (interchain with G-Cter in SUMO2). Residues 427–438 (KPPPAATGPPPS) show a composition bias toward pro residues. The C2H2-type 5; atypical zinc-finger motif lies at 447-469 (KICTICNELFPENVYSVHFEKEH). C2H2-type zinc fingers lie at residues 489–510 (SKCL…MLIH) and 512–535 (LSCP…RMVH). Residues Lys-600 and Lys-606 each participate in a glycyl lysine isopeptide (Lys-Gly) (interchain with G-Cter in SUMO2) cross-link. Ser-608 carries the phosphoserine modification. Glycyl lysine isopeptide (Lys-Gly) (interchain with G-Cter in SUMO2) cross-links involve residues Lys-616, Lys-621, Lys-632, and Lys-658. The C2H2-type 8; atypical zinc finger occupies 622 to 647 (TLCPLCFSILKGPISDALAHHLRERH). The C2H2-type 9; atypical zinc-finger motif lies at 662–686 (YKCIHCLGVYTSNMTASTITLHLVH). Positions 691 to 712 (GKTQNGQDKTNAPSRLNQSPGL) are disordered. Residues 692-710 (KTQNGQDKTNAPSRLNQSP) are compositionally biased toward polar residues. Residue Lys-699 forms a Glycyl lysine isopeptide (Lys-Gly) (interchain with G-Cter in SUMO2) linkage. Ser-709 bears the Phosphoserine mark. Residues Lys-716, Lys-728, and Lys-731 each participate in a glycyl lysine isopeptide (Lys-Gly) (interchain with G-Cter in SUMO2) cross-link. The residue at position 738 (Ser-738) is a Phosphoserine. A Glycyl lysine isopeptide (Lys-Gly) (interchain with G-Cter in SUMO2) cross-link involves residue Lys-745. The segment at residues 754 to 814 (LDPKGHEDDS…SNKRKKCVRD (61 aa)) is a DNA-binding region (homeobox). Ser-805 carries the post-translational modification Phosphoserine. Residues Lys-807, Lys-829, and Lys-835 each participate in a glycyl lysine isopeptide (Lys-Gly) (interchain with G-Cter in SUMO2) cross-link. The interval 873-1029 (DSFSDSFEHL…VQDDTEQLKW (157 aa)) is disordered. Phosphoserine occurs at positions 876, 878, 886, 889, and 905. Residues Lys-914, Lys-929, and Lys-936 each participate in a glycyl lysine isopeptide (Lys-Gly) (interchain with G-Cter in SUMO2) cross-link. Residues 922 to 954 (ESEKLDQKEEEDGSKYETIHLTEERAKLMHDAS) show a composition bias toward basic and acidic residues. Phosphoserine is present on residues Ser-954 and Ser-956. Polar residues predominate over residues 972–982 (PSESGPGSRQV). Lys-1017 is covalently cross-linked (Glycyl lysine isopeptide (Lys-Gly) (interchain with G-Cter in SUMO2)). N6-acetyllysine; alternate is present on residues Lys-1036 and Lys-1043. Residues Lys-1036 and Lys-1043 each participate in a glycyl lysine isopeptide (Lys-Gly) (interchain with G-Cter in SUMO2); alternate cross-link. Positions 1045 to 1103 (QSQWENASENAERLPNPQIEWQNSTIDSEDGEQFDSMTDGVADPMHGSLTGVKLSSQQA) are disordered. Ser-1072 carries the post-translational modification Phosphoserine.

Interacts (via N-terminal region) with beta-catenin/CTNNB1 (via the central armadillo domains); interaction is direct and stabilizes CTNNB1 by modulating its phosphorylation by glycogen synthase kinase-3 beta GSK3B.

The protein resides in the nucleus. It is found in the chromosome. May be involved in transcriptional regulation. May mediate some of the neuroprotective peptide VIP-associated effects involving normal growth and cancer proliferation. Positively modulates WNT-beta-catenin/CTNN1B signaling, acting by regulating phosphorylation of, and thereby stabilizing, CTNNB1. May be required for neural induction and neuronal differentiation. May be involved in erythroid differentiation. The polypeptide is Activity-dependent neuroprotector homeobox protein (Adnp) (Rattus norvegicus (Rat)).